The primary structure comprises 307 residues: Phospho-N-acetylmuramoyl-pentapeptide-transferase (307 aa).

10 consecutive transmembrane segments (helical) span residues 3–23 (IILFTSLVAFFVFLLILKYWI), 47–67 (SGTPVMGGIIFLIVSIPFLFF), 71–91 (FFPSLSTILFGLLGLLDDFKL), 105–125 (IFLSFIITLLLYIFSFHDYKI), 137–157 (IFYVILFFVVFIAVPNAINLT), 162–182 (GLAGGTSLITLFFFLIYNFQF), 186–206 (LTLEISLMITALIAFLWFNSH), 210–230 (IFMGDVGAFALGGFIASLSII), 237–257 (LVFLGGIFLIESLSVFIQVFF), and 285–305 (VVWRFYIIHLIMMIGGIILWN).

This sequence belongs to the glycosyltransferase 4 family. MraY subfamily. Mg(2+) is required as a cofactor.

The protein resides in the cell inner membrane. It catalyses the reaction UDP-N-acetyl-alpha-D-muramoyl-L-alanyl-gamma-D-glutamyl-meso-2,6-diaminopimeloyl-D-alanyl-D-alanine + di-trans,octa-cis-undecaprenyl phosphate = di-trans,octa-cis-undecaprenyl diphospho-N-acetyl-alpha-D-muramoyl-L-alanyl-D-glutamyl-meso-2,6-diaminopimeloyl-D-alanyl-D-alanine + UMP. It participates in cell wall biogenesis; peptidoglycan biosynthesis. In terms of biological role, catalyzes the initial step of the lipid cycle reactions in the biosynthesis of the cell wall peptidoglycan: transfers peptidoglycan precursor phospho-MurNAc-pentapeptide from UDP-MurNAc-pentapeptide onto the lipid carrier undecaprenyl phosphate, yielding undecaprenyl-pyrophosphoryl-MurNAc-pentapeptide, known as lipid I. The chain is Phospho-N-acetylmuramoyl-pentapeptide-transferase from Dictyoglomus turgidum (strain DSM 6724 / Z-1310).